Reading from the N-terminus, the 590-residue chain is Arginine--tRNA ligase (590 aa).

A 'HIGH' region motif is present at residues 130-140 (PNIAKEMHVGH).

The protein belongs to the class-I aminoacyl-tRNA synthetase family. Monomer.

The protein localises to the cytoplasm. It carries out the reaction tRNA(Arg) + L-arginine + ATP = L-arginyl-tRNA(Arg) + AMP + diphosphate. The sequence is that of Arginine--tRNA ligase from Synechococcus sp. (strain CC9605).